A 322-amino-acid chain; its full sequence is Secreted effector protein SseI (322 aa).

In terms of assembly, interacts with host IQGAP1 and host TRIP6 (thyroid receptor-interacting protein 6).

Its subcellular location is the secreted. It localises to the host cytoplasm. Its function is as follows. Effector proteins function to alter host cell physiology and promote bacterial survival in host tissues. This protein is required to maintain a long-term chronic systemic infection in mice. It inhibits normal cell migration of primary macrophages and dendritic cells, by a mechanism that involves interaction with the host factor IQGAP1, an important regulator of the cytoskeleton and cell migration. Also accelerates the systemic spread of infection from the gastrointestinal tract to the bloodstream, probably by interacting with host TRIP6. The chain is Secreted effector protein SseI (sseI) from Salmonella typhimurium (strain LT2 / SGSC1412 / ATCC 700720).